Reading from the N-terminus, the 311-residue chain is Transmembrane protein 177 (311 aa).

Residues 1-17 (MAGPLWRTAAFVQRHRT) lie on the Mitochondrial matrix side of the membrane. Residues 18-38 (GLLVGSCAGLFGVPISYHLFP) traverse the membrane as a helical segment. Topologically, residues 39-166 (DPVVQWLYQY…EVVYLESSTT (128 aa)) are mitochondrial intermembrane. The helical transmembrane segment at 167 to 187 (AVHALLAPACLAGTWALGVGA) threads the bilayer. Topologically, residues 188–197 (KYTLGLHAGP) are mitochondrial matrix. The helical transmembrane segment at 198 to 218 (MNLRAAFSLVAAVAGFVAYAF) threads the bilayer. Over 219–311 (SQDSLTHAVE…WRGMLNPGRS (93 aa)) the chain is Mitochondrial intermembrane.

It belongs to the TMEM177 family. In terms of assembly, found in a complex with COX20, COA6, MT-CO2/COX2, COX18, SCO1 and SCO2. Interacts with COX20. Interacts with COX1, MT-CO2/COX2, SCO1 and SCO2 in a COX20-dependent manner.

It localises to the mitochondrion inner membrane. Plays a role in the early steps of cytochrome c oxidase subunit II (MT-CO2/COX2) maturation and is required for the stabilization of COX20 and the newly synthesized MT-CO2/COX2 protein. The protein is Transmembrane protein 177 (TMEM177) of Homo sapiens (Human).